Reading from the N-terminus, the 73-residue chain is uncharacterized protein (73 aa).

A coiled-coil region spans residues 20–49 (NATYNKNLELEKRLAKIRNEIPNKSKLIAT).

This is an uncharacterized protein from Acheta domesticus (House cricket).